A 916-amino-acid polypeptide reads, in one-letter code: Alanine--tRNA ligase (916 aa).

Histidine 611, histidine 615, cysteine 714, and histidine 718 together coordinate Zn(2+).

This sequence belongs to the class-II aminoacyl-tRNA synthetase family. Zn(2+) is required as a cofactor.

It is found in the cytoplasm. It catalyses the reaction tRNA(Ala) + L-alanine + ATP = L-alanyl-tRNA(Ala) + AMP + diphosphate. Functionally, catalyzes the attachment of alanine to tRNA(Ala) in a two-step reaction: alanine is first activated by ATP to form Ala-AMP and then transferred to the acceptor end of tRNA(Ala). Also edits incorrectly charged Ser-tRNA(Ala) and Gly-tRNA(Ala) via its editing domain. In Methanospirillum hungatei JF-1 (strain ATCC 27890 / DSM 864 / NBRC 100397 / JF-1), this protein is Alanine--tRNA ligase.